We begin with the raw amino-acid sequence, 465 residues long: Sushi repeat-containing protein SRPX2 (465 aa).

Positions Met-1–Pro-23 are cleaved as a signal peptide. 3 consecutive Sushi domains span residues Ala-69–Gln-119, Met-120–Asp-178, and Arg-262–Pro-321. Disulfide bonds link Cys-71/Cys-105, Cys-91/Cys-117, Cys-122/Cys-163, and Cys-149/Cys-176. The region spanning Val-177–Val-261 is the HYR domain. Disulfide bonds link Cys-264–Cys-306 and Cys-292–Cys-319.

As to quaternary structure, forms homooligomers. Interacts with PLAUR (via the UPAR/Ly6 domains), ADAMTS4 and CTSB. Interacts with HGF; the interaction increases the mitogenic activity of HGF. In terms of processing, contains chondroitin sulfate chains. As to expression, expressed in neurons of the rolandic area of the brain (at protein level). Highly expressed in the brain, placenta, lung, trachea, uterus, adrenal gland, heart, ovary and placenta. Weakly expressed in the peripheral blood, brain and bone marrow. Expressed in numerous cancer cell lines and in gastrointestinal cancer cells. Higher levels found in colorectal cancers than in normal colonic mucosa.

The protein resides in the secreted. It is found in the cytoplasm. Its subcellular location is the cell surface. The protein localises to the synapse. Its function is as follows. Acts as a ligand for the urokinase plasminogen activator surface receptor. Plays a role in angiogenesis by inducing endothelial cell migration and the formation of vascular network (cords). Involved in cellular migration and adhesion. Increases the phosphorylation levels of FAK. Interacts with and increases the mitogenic activity of HGF. Promotes synapse formation. May have a role in the perisylvian region, critical for language and cognitive development. In Homo sapiens (Human), this protein is Sushi repeat-containing protein SRPX2 (SRPX2).